The following is a 120-amino-acid chain: Large ribosomal subunit protein uL22 (120 aa).

It belongs to the universal ribosomal protein uL22 family. In terms of assembly, part of the 50S ribosomal subunit.

In terms of biological role, this protein binds specifically to 23S rRNA; its binding is stimulated by other ribosomal proteins, e.g. L4, L17, and L20. It is important during the early stages of 50S assembly. It makes multiple contacts with different domains of the 23S rRNA in the assembled 50S subunit and ribosome. The globular domain of the protein is located near the polypeptide exit tunnel on the outside of the subunit, while an extended beta-hairpin is found that lines the wall of the exit tunnel in the center of the 70S ribosome. This Corynebacterium glutamicum (strain R) protein is Large ribosomal subunit protein uL22.